A 179-amino-acid chain; its full sequence is Adenine phosphoribosyltransferase (179 aa).

The protein belongs to the purine/pyrimidine phosphoribosyltransferase family. As to quaternary structure, homodimer.

It localises to the cytoplasm. The catalysed reaction is AMP + diphosphate = 5-phospho-alpha-D-ribose 1-diphosphate + adenine. It participates in purine metabolism; AMP biosynthesis via salvage pathway; AMP from adenine: step 1/1. Functionally, catalyzes a salvage reaction resulting in the formation of AMP, that is energically less costly than de novo synthesis. The polypeptide is Adenine phosphoribosyltransferase (Bradyrhizobium sp. (strain BTAi1 / ATCC BAA-1182)).